Here is a 231-residue protein sequence, read N- to C-terminus: 5'-methylthioadenosine/S-adenosylhomocysteine nucleosidase (231 aa).

The active-site Proton acceptor is the Glu12. Residues Gly78, Val153, and 174-175 (ME) contribute to the substrate site. The active-site Proton donor is Asp198.

Belongs to the PNP/UDP phosphorylase family. MtnN subfamily.

The enzyme catalyses S-adenosyl-L-homocysteine + H2O = S-(5-deoxy-D-ribos-5-yl)-L-homocysteine + adenine. It catalyses the reaction S-methyl-5'-thioadenosine + H2O = 5-(methylsulfanyl)-D-ribose + adenine. It carries out the reaction 5'-deoxyadenosine + H2O = 5-deoxy-D-ribose + adenine. Its pathway is amino-acid biosynthesis; L-methionine biosynthesis via salvage pathway; S-methyl-5-thio-alpha-D-ribose 1-phosphate from S-methyl-5'-thioadenosine (hydrolase route): step 1/2. Catalyzes the irreversible cleavage of the glycosidic bond in both 5'-methylthioadenosine (MTA) and S-adenosylhomocysteine (SAH/AdoHcy) to adenine and the corresponding thioribose, 5'-methylthioribose and S-ribosylhomocysteine, respectively. Also cleaves 5'-deoxyadenosine, a toxic by-product of radical S-adenosylmethionine (SAM) enzymes, into 5-deoxyribose and adenine. The chain is 5'-methylthioadenosine/S-adenosylhomocysteine nucleosidase from Aliivibrio salmonicida (strain LFI1238) (Vibrio salmonicida (strain LFI1238)).